Reading from the N-terminus, the 97-residue chain is MAWRGSISKSMKELRILLCQSSPASAPTRTFVEKNYKDLKSLNPKLPILIRECSGVQPQMWARYDMGVERCVNLDGLTEPQILKALENLVKSGATKA.

A disulfide bridge links C19 with C53.

It belongs to the complex I NDUFA2 subunit family. In terms of assembly, complex I is composed of at least 49 different subunits.

It localises to the mitochondrion inner membrane. Its function is as follows. Accessory subunit of the mitochondrial membrane respiratory chain NADH dehydrogenase (Complex I), that is believed not to be involved in catalysis. Complex I functions in the transfer of electrons from NADH to the respiratory chain. The immediate electron acceptor for the enzyme is believed to be ubiquinone. The chain is NADH dehydrogenase [ubiquinone] 1 alpha subcomplex subunit 2 from Arabidopsis thaliana (Mouse-ear cress).